A 351-amino-acid chain; its full sequence is uncharacterized protein (351 aa).

Mn(2+) is bound by residues D215, D226, H290, E319, and E333.

It belongs to the peptidase M24B family. It depends on Mn(2+) as a cofactor.

This is an uncharacterized protein from Staphylococcus epidermidis (strain ATCC 35984 / DSM 28319 / BCRC 17069 / CCUG 31568 / BM 3577 / RP62A).